A 946-amino-acid polypeptide reads, in one-letter code: Structure-specific endonuclease subunit SLX4 (946 aa).

A compositionally biased stretch (pro residues) spans 1 to 14 (MPASPLPALSPPAS). 7 disordered regions span residues 1 to 35 (MPAS…IPPD), 54 to 119 (QHFD…EEAV), 147 to 318 (PSDE…GGFT), 339 to 399 (ADSA…AAQL), 416 to 471 (TKVP…PKHI), 577 to 748 (FPLL…GSGR), and 765 to 799 (ALSP…KADS). Over residues 54 to 74 (QHFDDDIAGKDQEQSRKKSPE) the composition is skewed to basic and acidic residues. Composition is skewed to basic residues over residues 160 to 169 (KAGKPRKPRA) and 182 to 195 (KPKR…KAAK). Over residues 278–287 (AVSRRRDWTP) the composition is skewed to basic and acidic residues. Positions 453–469 (SKARSKKASTKAAAKPK) are enriched in basic residues. The span at 627–636 (KANDEPDHVM) shows a compositional bias: basic and acidic residues. Residues 707 to 717 (KSQSAIATSGS) show a composition bias toward polar residues. Over residues 722–733 (KEPKRTKGKEVK) the composition is skewed to basic and acidic residues.

The protein belongs to the SLX4 family. Forms a heterodimer with SLX1. Post-translationally, phosphorylated in response to DNA damage.

The protein resides in the nucleus. Its function is as follows. Regulatory subunit of the SLX1-SLX4 structure-specific endonuclease that resolves DNA secondary structures generated during DNA repair and recombination. Has endonuclease activity towards branched DNA substrates, introducing single-strand cuts in duplex DNA close to junctions with ss-DNA. In Phaeosphaeria nodorum (strain SN15 / ATCC MYA-4574 / FGSC 10173) (Glume blotch fungus), this protein is Structure-specific endonuclease subunit SLX4.